A 333-amino-acid chain; its full sequence is Adenosine deaminase (333 aa).

2 residues coordinate Zn(2+): His12 and His14. Residues His14, Asp16, and Gly170 each contribute to the substrate site. Residue His197 participates in Zn(2+) binding. Residue Glu200 is the Proton donor of the active site. Asp278 is a Zn(2+) binding site. A substrate-binding site is contributed by Asp279.

Belongs to the metallo-dependent hydrolases superfamily. Adenosine and AMP deaminases family. Adenosine deaminase subfamily. Zn(2+) is required as a cofactor.

It carries out the reaction adenosine + H2O + H(+) = inosine + NH4(+). The catalysed reaction is 2'-deoxyadenosine + H2O + H(+) = 2'-deoxyinosine + NH4(+). Its function is as follows. Catalyzes the hydrolytic deamination of adenosine and 2-deoxyadenosine. In Salmonella gallinarum (strain 287/91 / NCTC 13346), this protein is Adenosine deaminase.